A 382-amino-acid chain; its full sequence is MSLKEKTQSLFANAFGYPATHTIQAPGRVNLIGEHTDYNDGFVLPCAIDYQTVISCAPRDDHKVRVMAADYENQLDEFSLDAPIVAHENYQWANYVRGVVKHLQLRNNSFGGVDMVISGNVPQGAGLSSSASLEVAVGTVLQQLYHLPLDGAQIALNGQEAENQFVGCNCGIMDQLISALGKKDHALLIDCRSLGTKAVSMPKGVAVVIINSNFKRTLVGSEYNTRREQCETGARFFQQPALRDVTIEEFNAVAHELDPIVAKRVRHILTENARTVEAASALEQGDLKRMGELMAESHASMRDDFEITVPQIDTLVEIVKAVIGDKGGVRMTGGGFGGCIVALIPEELVPAVQQAVAEQYEAKTGIKETFYVCKPSQGAGQC.

Residue 34–37 (EHTD) coordinates substrate. 124–130 (GAGLSSS) lines the ATP pocket. 2 residues coordinate Mg(2+): Ser-130 and Glu-162. Residue Asp-174 is the Proton acceptor of the active site. Tyr-223 lines the substrate pocket.

It belongs to the GHMP kinase family. GalK subfamily.

The protein localises to the cytoplasm. The catalysed reaction is alpha-D-galactose + ATP = alpha-D-galactose 1-phosphate + ADP + H(+). It participates in carbohydrate metabolism; galactose metabolism. Functionally, catalyzes the transfer of the gamma-phosphate of ATP to D-galactose to form alpha-D-galactose-1-phosphate (Gal-1-P). The polypeptide is Galactokinase (Escherichia coli O17:K52:H18 (strain UMN026 / ExPEC)).